A 328-amino-acid polypeptide reads, in one-letter code: Tetraacyldisaccharide 4'-kinase (328 aa).

An ATP-binding site is contributed by 55–62; the sequence is TAGGNGKT.

It belongs to the LpxK family.

The catalysed reaction is a lipid A disaccharide + ATP = a lipid IVA + ADP + H(+). Its pathway is glycolipid biosynthesis; lipid IV(A) biosynthesis; lipid IV(A) from (3R)-3-hydroxytetradecanoyl-[acyl-carrier-protein] and UDP-N-acetyl-alpha-D-glucosamine: step 6/6. Its function is as follows. Transfers the gamma-phosphate of ATP to the 4'-position of a tetraacyldisaccharide 1-phosphate intermediate (termed DS-1-P) to form tetraacyldisaccharide 1,4'-bis-phosphate (lipid IVA). In Shigella flexneri serotype 5b (strain 8401), this protein is Tetraacyldisaccharide 4'-kinase.